A 282-amino-acid chain; its full sequence is Biotin synthase (282 aa).

One can recognise a Radical SAM core domain in the interval 1-228 (MQEIFLCSIS…NARLMVAGGR (228 aa)). Residues Cys-17, Cys-21, and Cys-24 each coordinate [4Fe-4S] cluster. 4 residues coordinate [2Fe-2S] cluster: Cys-61, Cys-96, Cys-154, and Arg-221.

The protein belongs to the radical SAM superfamily. Biotin synthase family. In terms of assembly, homodimer. The cofactor is [4Fe-4S] cluster. It depends on [2Fe-2S] cluster as a cofactor.

The catalysed reaction is (4R,5S)-dethiobiotin + (sulfur carrier)-SH + 2 reduced [2Fe-2S]-[ferredoxin] + 2 S-adenosyl-L-methionine = (sulfur carrier)-H + biotin + 2 5'-deoxyadenosine + 2 L-methionine + 2 oxidized [2Fe-2S]-[ferredoxin]. It participates in cofactor biosynthesis; biotin biosynthesis; biotin from 7,8-diaminononanoate: step 2/2. Catalyzes the conversion of dethiobiotin (DTB) to biotin by the insertion of a sulfur atom into dethiobiotin via a radical-based mechanism. The polypeptide is Biotin synthase (Helicobacter pylori (strain ATCC 700392 / 26695) (Campylobacter pylori)).